Here is a 214-residue protein sequence, read N- to C-terminus: 3,4-dihydroxy-2-butanone 4-phosphate synthase (214 aa).

D-ribulose 5-phosphate is bound by residues 37-38 (RE), D42, 150-154 (RPGHT), and E174. E38 is a binding site for Mg(2+). H153 contacts Mg(2+).

This sequence belongs to the DHBP synthase family. Homodimer. The cofactor is Mg(2+). Mn(2+) is required as a cofactor.

The enzyme catalyses D-ribulose 5-phosphate = (2S)-2-hydroxy-3-oxobutyl phosphate + formate + H(+). The protein operates within cofactor biosynthesis; riboflavin biosynthesis; 2-hydroxy-3-oxobutyl phosphate from D-ribulose 5-phosphate: step 1/1. Catalyzes the conversion of D-ribulose 5-phosphate to formate and 3,4-dihydroxy-2-butanone 4-phosphate. This is 3,4-dihydroxy-2-butanone 4-phosphate synthase from Mannheimia succiniciproducens (strain KCTC 0769BP / MBEL55E).